Reading from the N-terminus, the 182-residue chain is ATP synthase subunit b, chloroplastic (182 aa).

The helical transmembrane segment at 29-47 (IINLALLIVLVINVAKDVL) threads the bilayer.

It belongs to the ATPase B chain family. F-type ATPases have 2 components, F(1) - the catalytic core - and F(0) - the membrane proton channel. F(1) has five subunits: alpha(3), beta(3), gamma(1), delta(1), epsilon(1). F(0) has four main subunits: a(1), b(1), b'(1) and c(10-14). The alpha and beta chains form an alternating ring which encloses part of the gamma chain. F(1) is attached to F(0) by a central stalk formed by the gamma and epsilon chains, while a peripheral stalk is formed by the delta, b and b' chains.

The protein localises to the plastid. It is found in the chloroplast thylakoid membrane. In terms of biological role, f(1)F(0) ATP synthase produces ATP from ADP in the presence of a proton or sodium gradient. F-type ATPases consist of two structural domains, F(1) containing the extramembraneous catalytic core and F(0) containing the membrane proton channel, linked together by a central stalk and a peripheral stalk. During catalysis, ATP synthesis in the catalytic domain of F(1) is coupled via a rotary mechanism of the central stalk subunits to proton translocation. Functionally, component of the F(0) channel, it forms part of the peripheral stalk, linking F(1) to F(0). This Heterosigma akashiwo (strain NIES-293 / 8280G21-1) protein is ATP synthase subunit b, chloroplastic.